A 659-amino-acid polypeptide reads, in one-letter code: Cysteine-rich receptor-like protein kinase 18 (659 aa).

The signal sequence occupies residues 1–27 (MATKSCELVLCFFVFFVISFSAISVSA). Gnk2-homologous domains follow at residues 28–131 (QTCD…NRPF) and 137–250 (MDPL…VYPF). The Extracellular segment spans residues 28 to 287 (QTCDNTTGTF…KNDSRISGGK (260 aa)). Residues asparagine 32, asparagine 57, asparagine 152, asparagine 162, asparagine 179, asparagine 180, asparagine 197, asparagine 275, and asparagine 279 are each glycosylated (N-linked (GlcNAc...) asparagine). The helical transmembrane segment at 288–308 (IAAIVVVTVVTIILVVLGFVI) threads the bilayer. Over 309-659 (SNRRKQKQEM…EATITDVNPR (351 aa)) the chain is Cytoplasmic. One can recognise a Protein kinase domain in the interval 339–611 (FSERNKLGKG…PTMSTIHQML (273 aa)). Residues 345–353 (LGKGGFGEV) and lysine 367 each bind ATP. Tyrosine 412 carries the phosphotyrosine modification. Catalysis depends on aspartate 464, which acts as the Proton acceptor. Serine 468 is modified (phosphoserine). Threonine 504 bears the Phosphothreonine mark. Tyrosine 512 carries the post-translational modification Phosphotyrosine.

Belongs to the protein kinase superfamily. Ser/Thr protein kinase family. CRK subfamily.

The protein resides in the membrane. It carries out the reaction L-seryl-[protein] + ATP = O-phospho-L-seryl-[protein] + ADP + H(+). It catalyses the reaction L-threonyl-[protein] + ATP = O-phospho-L-threonyl-[protein] + ADP + H(+). This Arabidopsis thaliana (Mouse-ear cress) protein is Cysteine-rich receptor-like protein kinase 18 (CRK18).